Consider the following 205-residue polypeptide: Pectinesterase inhibitor 3 (205 aa).

Positions 1–25 (MAPTQNLFLVAIAFAVIFTASTVHG) are cleaved as a signal peptide. 2 cysteine pairs are disulfide-bonded: C38-C47 and C104-C156.

The protein belongs to the PMEI family. As to expression, expressed in apical meristem.

The protein localises to the secreted. It localises to the extracellular space. The protein resides in the apoplast. Its function is as follows. Pectin methylesterase (PME) inhibitor that can target PMEs (e.g. PME2 and PME3) in a pH-dependent manner, mainly in slightly acidic conditions (pH 6.3 and 5.0) but not at pH 7.5; this processus relies on changes in the protonation of amino acids involved in intermolecular and intramolecular interactions. Regulates de-methylesterification of pectins in the apical meristem and affects primordia formation and phyllotactic patterning. In Arabidopsis thaliana (Mouse-ear cress), this protein is Pectinesterase inhibitor 3.